The primary structure comprises 607 residues: Nexilin (607 aa).

The segment covering 1-14 (MNDVSQKAEIKEML) has biased composition (basic and acidic residues). 2 disordered regions span residues 1-143 (MNDV…EDKM) and 165-268 (ETEA…RRRI). Residue Ser16 is modified to Phosphoserine. 4 stretches are compositionally biased toward basic and acidic residues: residues 40 to 85 (GKFD…RAEQ), 120 to 143 (KTKD…EDKM), 167 to 221 (EAKK…HMVN), and 228 to 268 (DRET…RRRI). Ser172 bears the Phosphoserine mark. A phosphoserine mark is found at Ser281, Ser288, and Ser296. Residue Thr301 is modified to Phosphothreonine. 2 disordered regions span residues 419–444 (NFHE…KVNM) and 480–514 (AALQ…GAPW). Phosphoserine occurs at positions 495 and 500. At Thr502 the chain carries Phosphothreonine. The Ig-like domain occupies 513–601 (PWFKKPLRNT…GSAASTCILT (89 aa)).

Interacts with F-actin.

It localises to the cytoplasm. The protein localises to the cytoskeleton. The protein resides in the cell junction. It is found in the adherens junction. Its subcellular location is the myofibril. It localises to the sarcomere. The protein localises to the z line. Involved in regulating cell migration through association with the actin cytoskeleton. Has an essential role in the maintenance of Z line and sarcomere integrity. This chain is Nexilin, found in Mus musculus (Mouse).